A 407-amino-acid chain; its full sequence is Peptidase T (407 aa).

His-78 is a binding site for Zn(2+). Residue Asp-80 is part of the active site. Asp-139 lines the Zn(2+) pocket. The Proton acceptor role is filled by Glu-173. Zn(2+) contacts are provided by Glu-174, Asp-196, and His-378.

It belongs to the peptidase M20B family. Requires Zn(2+) as cofactor.

Its subcellular location is the cytoplasm. The enzyme catalyses Release of the N-terminal residue from a tripeptide.. Its function is as follows. Cleaves the N-terminal amino acid of tripeptides. The chain is Peptidase T from Macrococcus caseolyticus (strain JCSC5402) (Macrococcoides caseolyticum).